The primary structure comprises 415 residues: Corticotropin-releasing factor receptor 1 (415 aa).

The signal sequence occupies residues 1-23 (MGRRPQLRLVKALLLLGLNPVST). The Extracellular portion of the chain corresponds to 24 to 111 (SLQDQRCENL…CQEILNEEKK (88 aa)). Intrachain disulfides connect C30/C54, C44/C87, and C68/C102. 5 N-linked (GlcNAc...) asparagine glycosylation sites follow: N38, N45, N78, N90, and N98. An important for peptide agonist binding region spans residues 99–108 (YSECQEILNE). Residues 112–142 (SKVHYHVAVIINYLGHCISLVALLVAFVLFL) form a helical membrane-spanning segment. At 143 to 149 (RLRSIRC) the chain is on the cytoplasmic side. A helical transmembrane segment spans residues 150-174 (LRNIIHWNLISAFILRNATWFVVQL). Over 175-189 (TVSPEVHQSNVAWCR) the chain is Extracellular. C188 and C258 are oxidised to a cystine. The helical transmembrane segment at 190–218 (LVTAAYNYFHVTNFFWMFGEGCYLHTAIV) threads the bilayer. Topologically, residues 219 to 225 (LTYSTDR) are cytoplasmic. Residues 226–253 (LRKWMFVCIGWGVPFPIIVAWAIGKLHY) traverse the membrane as a helical segment. Residues 254 to 269 (DNEKCWFGKRPGVYTD) are Extracellular-facing. Residues 270 to 295 (YIYQGPMILVLLINFIFLFNIVRILM) traverse the membrane as a helical segment. An important for antagonist binding region spans residues 280–290 (LLINFIFLFNI). Residues 296–306 (TKLRASTTSET) are Cytoplasmic-facing. Position 301 is a phosphoserine; by PKA (S301). The helical transmembrane segment at 307-331 (IQYRKAVKATLVLLPLLGITYMLFF) threads the bilayer. The Extracellular segment spans residues 332–338 (VNPGEDE). The helical transmembrane segment at 339-368 (VSRVVFIYFNSFLESFQGFFVSVFYCFLNS) threads the bilayer. The Cytoplasmic segment spans residues 369–415 (EVRSAIRKRWRRWQDKHSIRARVARAMSIPTSPTRVSFHSIKQSTAV).

Belongs to the G-protein coupled receptor 2 family. In terms of assembly, interacts (via N-terminal extracellular domain) with CRH and UCN. Interacts with DLG1; this inhibits endocytosis of CRHR1 after agonist binding. Heterodimer; heterodimerizes with GPER1. C-terminal Ser or Thr residues may be phosphorylated. Post-translationally, phosphorylation at Ser-301 by PKA prevents maximal coupling to Gq-protein, and thereby negatively regulates downstream signaling. Detected in brain, especially in cerebellum. Detected in pituitary gland, and at lower levels in the olfactory bulb.

Its subcellular location is the cell membrane. It localises to the endosome. Functionally, G-protein coupled receptor for CRH (corticotropin-releasing factor) and UCN (urocortin). Has high affinity for CRH and UCN. Ligand binding causes a conformation change that triggers signaling via guanine nucleotide-binding proteins (G proteins) and down-stream effectors, such as adenylate cyclase. Promotes the activation of adenylate cyclase, leading to increased intracellular cAMP levels. Inhibits the activity of the calcium channel CACNA1H. Required for normal embryonic development of the adrenal gland and for normal hormonal responses to stress. Plays a role in the response to anxiogenic stimuli. The polypeptide is Corticotropin-releasing factor receptor 1 (Crhr1) (Rattus norvegicus (Rat)).